A 1077-amino-acid chain; its full sequence is Disheveled-associated activator of morphogenesis 1 (1077 aa).

Position 34 is a phosphoserine (serine 34). The GBD/FH3 domain occupies 45-420; sequence LPMPPVEELD…QIVIQNDKGQ (376 aa). Residues 437–526 adopt a coiled-coil conformation; it reads RMLVNENEVK…ELNRRAVCAA (90 aa). Disordered stretches follow at residues 457-478 and 526-596; these read KEHN…AKTQ and AVPG…PVSL. An FH1 domain is found at 528-599; that stretch reads PGGPSPGAPG…PGAPVSLTLK (72 aa). Composition is skewed to pro residues over residues 530–539 and 549–592; these read GPSPGAPGGP and LPPP…PPGA. In terms of domain architecture, FH2 spans 600–1008; that stretch reads KKNIPQPTNA…EERRARLEAQ (409 aa). The actin-binding stretch occupies residues 693–702; that stretch reads QNCNILLSRL. Residues 1007-1026 show a composition bias toward basic and acidic residues; sequence AQLKEQRERERKVRKAKESS. Disordered regions lie at residues 1007 to 1033 and 1056 to 1077; these read AQLK…GEFD and RKRI…KLNF. Serine 1026 and serine 1029 each carry phosphoserine. Residues 1026-1057 enclose the DAD domain; sequence SEESGEFDDLVSALRSGEVFDKDLSKLKRNRK. Residues 1066–1077 are compositionally biased toward basic and acidic residues; it reads SSRERPITKLNF.

Belongs to the formin homology family. Interacts with CIP4, FNBP1 and FNBP1L. Interacts with the SH3 domains of Abl, BTK, endophilin, spectrin and SRC. Binds specifically to GTP-bound CDC42 and RHOA. Interacts with INTU; INTU mediates the indirect interaction between DAAM1 and NPHP4. Interacts (via coiled coil domain) with KANK1 (via coiled coil domain). As to expression, in early embryogenesis, expressed in embryonic and extraembryonic ectoderm. In later stages of gastrulation, expressed also in somites and ribs and posterior vertebrae of developing skeletal system. During organogenesis, expressed in CNS, PNS, stomach, liver and limb bud.

It is found in the cytoplasm. The protein localises to the cytoskeleton. It localises to the cilium basal body. Functionally, binds to disheveled (Dvl) and Rho, and mediates Wnt-induced Dvl-Rho complex formation. May play a role as a scaffolding protein to recruit Rho-GDP and Rho-GEF, thereby enhancing Rho-GTP formation. Can direct nucleation and elongation of new actin filaments. Involved in building functional cilia. Involved in the organization of the subapical actin network in multiciliated epithelial cells. Together with DAAM2, required for myocardial maturation and sarcomere assembly. During cell division, may regulate RHOA activation that signals spindle orientation and chromosomal segregation. The protein is Disheveled-associated activator of morphogenesis 1 (Daam1) of Mus musculus (Mouse).